The following is a 346-amino-acid chain: Probable electron transfer flavoprotein subunit alpha, mitochondrial (346 aa).

Residue 285–313 coordinates FAD; it reads LYVAVGISGAIQHLAGMKESKMIVAINKD.

This sequence belongs to the ETF alpha-subunit/FixB family. In terms of assembly, heterodimer of an alpha and a beta subunit. FAD is required as a cofactor.

It localises to the mitochondrion matrix. The electron transfer flavoprotein serves as a specific electron acceptor for several dehydrogenases, including five acyl-CoA dehydrogenases, glutaryl-CoA and sarcosine dehydrogenase. It transfers the electrons to the main mitochondrial respiratory chain via ETF-ubiquinone oxidoreductase (ETF dehydrogenase). The sequence is that of Probable electron transfer flavoprotein subunit alpha, mitochondrial (ETF1) from Cryptococcus neoformans var. grubii (Filobasidiella neoformans var. grubii).